The primary structure comprises 212 residues: Protein-L-isoaspartate O-methyltransferase (212 aa).

The active site involves S60.

This sequence belongs to the methyltransferase superfamily. L-isoaspartyl/D-aspartyl protein methyltransferase family.

It is found in the cytoplasm. The enzyme catalyses [protein]-L-isoaspartate + S-adenosyl-L-methionine = [protein]-L-isoaspartate alpha-methyl ester + S-adenosyl-L-homocysteine. Catalyzes the methyl esterification of L-isoaspartyl residues in peptides and proteins that result from spontaneous decomposition of normal L-aspartyl and L-asparaginyl residues. It plays a role in the repair and/or degradation of damaged proteins. The polypeptide is Protein-L-isoaspartate O-methyltransferase (Pseudomonas putida (strain ATCC 700007 / DSM 6899 / JCM 31910 / BCRC 17059 / LMG 24140 / F1)).